We begin with the raw amino-acid sequence, 233 residues long: Putative T-box protein 41 (233 aa).

Residues 1-146 (MTVTRNGCRI…MNPHARHFLK (146 aa)) constitute a DNA-binding region (T-box).

The protein resides in the nucleus. The chain is Putative T-box protein 41 (tbx-41) from Caenorhabditis elegans.